A 137-amino-acid chain; its full sequence is MLQPKRTKFRKQFKGSIKGLAKGGSDLNFGTYGLKAIEPERITARQIEAARRAMTRHMKRQGRVWIRIFPDVPVTAKPIEVRMGKGKGSVDRWAAKVKPGRVMFEIDGVNDDVAREALRLAAMKLPIKTRVVVREDW.

It belongs to the universal ribosomal protein uL16 family. Part of the 50S ribosomal subunit.

Binds 23S rRNA and is also seen to make contacts with the A and possibly P site tRNAs. This is Large ribosomal subunit protein uL16 from Roseobacter denitrificans (strain ATCC 33942 / OCh 114) (Erythrobacter sp. (strain OCh 114)).